The chain runs to 290 residues: 33 kDa chaperonin (290 aa).

Disulfide bonds link Cys236/Cys238 and Cys269/Cys272.

Belongs to the HSP33 family. Post-translationally, under oxidizing conditions two disulfide bonds are formed involving the reactive cysteines. Under reducing conditions zinc is bound to the reactive cysteines and the protein is inactive.

The protein localises to the cytoplasm. Redox regulated molecular chaperone. Protects both thermally unfolding and oxidatively damaged proteins from irreversible aggregation. Plays an important role in the bacterial defense system toward oxidative stress. The protein is 33 kDa chaperonin of Brevibacillus brevis (strain 47 / JCM 6285 / NBRC 100599).